Consider the following 728-residue polypeptide: Polyribonucleotide nucleotidyltransferase (728 aa).

2 residues coordinate Mg(2+): Asp487 and Asp493. A KH domain is found at 554–613 (PRIEVITVPTDKIREVIGTGGKVIREIVEKTGAKVDISDDGTIKVASSDGESIRKAIAWI). In terms of domain architecture, S1 motif spans 623 to 691 (GKIYEGTVVK…DRGKVRLSMK (69 aa)). Residues 697 to 707 (TGEEIVYENEP) show a composition bias toward acidic residues. The interval 697 to 728 (TGEEIVYENEPAEQPREKREGGGGRGRRRERD) is disordered. Residues 709-718 (EQPREKREGG) are compositionally biased toward basic and acidic residues.

Belongs to the polyribonucleotide nucleotidyltransferase family. Requires Mg(2+) as cofactor.

It localises to the cytoplasm. It carries out the reaction RNA(n+1) + phosphate = RNA(n) + a ribonucleoside 5'-diphosphate. Involved in mRNA degradation. Catalyzes the phosphorolysis of single-stranded polyribonucleotides processively in the 3'- to 5'-direction. The sequence is that of Polyribonucleotide nucleotidyltransferase from Parvibaculum lavamentivorans (strain DS-1 / DSM 13023 / NCIMB 13966).